The following is an 88-amino-acid chain: Low calcium response locus protein S (88 aa).

The protein belongs to the transposase 8 family.

The protein is Low calcium response locus protein S (lcrS) of Yersinia pestis.